Consider the following 405-residue polypeptide: Diaminohydroxyphosphoribosylamino-pyrimidine deaminase (405 aa).

Residues 256 to 383 enclose the CMP/dCMP-type deaminase domain; that stretch reads YNHEEYMLKA…DLLKKAGIVV (128 aa). A Zn(2+)-binding site is contributed by His305. The active-site Proton donor is the Glu307. Cys335 and Cys345 together coordinate Zn(2+).

Belongs to the cytidine and deoxycytidylate deaminase family. Zn(2+) serves as cofactor.

It localises to the cytoplasm. It is found in the nucleus. The catalysed reaction is 2,5-diamino-6-hydroxy-4-(5-phosphoribosylamino)-pyrimidine + H2O + H(+) = 5-amino-6-(5-phospho-D-ribosylamino)uracil + NH4(+). Its pathway is cofactor biosynthesis; riboflavin biosynthesis; 5-amino-6-(D-ribitylamino)uracil from GTP: step 2/4. Its function is as follows. Involved in riboflavin biosynthesis. Converts 2,5-diamino-6-(ribosylamino)-4(3H)-pyrimidinone 5'-phosphate into 5-amino-6-(ribosylamino)-2,4(1H,3H)-pyrimidinedione 5'-phosphate. In Schizosaccharomyces pombe (strain 972 / ATCC 24843) (Fission yeast), this protein is Diaminohydroxyphosphoribosylamino-pyrimidine deaminase.